Here is a 337-residue protein sequence, read N- to C-terminus: Ketol-acid reductoisomerase (NADP(+)) (337 aa).

Residues 3-183 (VEMFYDDDAD…GGTRAGVIKT (181 aa)) form the KARI N-terminal Rossmann domain. NADP(+)-binding positions include 26 to 29 (YGSQ), Lys-49, Ser-52, Ser-54, and 84 to 87 (DTAQ). The active site involves His-109. Gly-135 is an NADP(+) binding site. One can recognise a KARI C-terminal knotted domain in the interval 184-329 (TFKEETETDL…KKLRDLMSWV (146 aa)). The Mg(2+) site is built by Asp-192, Glu-196, Glu-228, and Glu-232. Ser-253 provides a ligand contact to substrate.

It belongs to the ketol-acid reductoisomerase family. It depends on Mg(2+) as a cofactor.

The enzyme catalyses (2R)-2,3-dihydroxy-3-methylbutanoate + NADP(+) = (2S)-2-acetolactate + NADPH + H(+). It catalyses the reaction (2R,3R)-2,3-dihydroxy-3-methylpentanoate + NADP(+) = (S)-2-ethyl-2-hydroxy-3-oxobutanoate + NADPH + H(+). It participates in amino-acid biosynthesis; L-isoleucine biosynthesis; L-isoleucine from 2-oxobutanoate: step 2/4. Its pathway is amino-acid biosynthesis; L-valine biosynthesis; L-valine from pyruvate: step 2/4. Functionally, involved in the biosynthesis of branched-chain amino acids (BCAA). Catalyzes an alkyl-migration followed by a ketol-acid reduction of (S)-2-acetolactate (S2AL) to yield (R)-2,3-dihydroxy-isovalerate. In the isomerase reaction, S2AL is rearranged via a Mg-dependent methyl migration to produce 3-hydroxy-3-methyl-2-ketobutyrate (HMKB). In the reductase reaction, this 2-ketoacid undergoes a metal-dependent reduction by NADPH to yield (R)-2,3-dihydroxy-isovalerate. The chain is Ketol-acid reductoisomerase (NADP(+)) from Rhodococcus erythropolis (strain PR4 / NBRC 100887).